The chain runs to 485 residues: Probable serine/threonine-protein kinase nek1 (485 aa).

The region spanning 12–283 is the Protein kinase domain; that stretch reads YLIKSQIGSG…TQQILEQVFI (272 aa). Residues 18–26 and Lys41 each bind ATP; that span reads IGSGSYGNT. The active-site Proton acceptor is the Asp136. Residues 354–365 are compositionally biased toward polar residues; sequence KNQQQQSPQKLE. The segment at 354–419 is disordered; sequence KNQQQQSPQK…NNDKNNNINN (66 aa). Positions 366-419 are enriched in low complexity; the sequence is NNNNNNNDNNNNNNNNNNNNNNNNNNNNNNNNNNNNNNNNNNNNNNDKNNNINN.

Belongs to the protein kinase superfamily. NEK Ser/Thr protein kinase family. NIMA subfamily.

The catalysed reaction is L-seryl-[protein] + ATP = O-phospho-L-seryl-[protein] + ADP + H(+). The enzyme catalyses L-threonyl-[protein] + ATP = O-phospho-L-threonyl-[protein] + ADP + H(+). In Dictyostelium discoideum (Social amoeba), this protein is Probable serine/threonine-protein kinase nek1 (nek1).